Consider the following 377-residue polypeptide: Transmembrane 6 superfamily member 2 (377 aa).

Helical transmembrane passes span 10–30 (IAAL…VSAL), 34–54 (LWVA…VYSL), 63–83 (PLYA…IIAL), 111–131 (FICY…AGAI), 140–160 (FGLY…TGNI), 170–190 (PAFF…MKVF), 219–239 (LALV…GLVV), 269–289 (MLMY…ALTF), and 332–352 (TWGC…LLAY). EXPERA domains are found at residues 61–186 (YDPL…CWAG) and 217–351 (ADLA…HLLA).

The protein belongs to the TM6SF family. As to expression, substantial expression in liver and intestine, whereas all other tissues analyzed show low levels.

It localises to the endoplasmic reticulum membrane. The protein resides in the endoplasmic reticulum-Golgi intermediate compartment membrane. Functionally, regulator of liver fat metabolism influencing triglyceride secretion and hepatic lipid droplet content. May function as sterol isomerase. In Homo sapiens (Human), this protein is Transmembrane 6 superfamily member 2 (TM6SF2).